Reading from the N-terminus, the 787-residue chain is Penicillin-binding protein 1A (787 aa).

Over Met-1 to Phe-6 the chain is Cytoplasmic. A helical; Signal-anchor for type II membrane protein transmembrane segment spans residues Leu-7–Ile-27. Over Tyr-28–Tyr-787 the chain is Periplasmic. Residues Thr-49 to Ser-220 form a transglycosylase region. The active-site Proton donor; for transglycosylase activity is Glu-87. The transpeptidase stretch occupies residues Asp-398–Asp-711. Ser-457 functions as the Acyl-ester intermediate; for transpeptidase activity in the catalytic mechanism.

It in the N-terminal section; belongs to the glycosyltransferase 51 family. The protein in the C-terminal section; belongs to the transpeptidase family.

Its subcellular location is the cell inner membrane. It catalyses the reaction [GlcNAc-(1-&gt;4)-Mur2Ac(oyl-L-Ala-gamma-D-Glu-L-Lys-D-Ala-D-Ala)](n)-di-trans,octa-cis-undecaprenyl diphosphate + beta-D-GlcNAc-(1-&gt;4)-Mur2Ac(oyl-L-Ala-gamma-D-Glu-L-Lys-D-Ala-D-Ala)-di-trans,octa-cis-undecaprenyl diphosphate = [GlcNAc-(1-&gt;4)-Mur2Ac(oyl-L-Ala-gamma-D-Glu-L-Lys-D-Ala-D-Ala)](n+1)-di-trans,octa-cis-undecaprenyl diphosphate + di-trans,octa-cis-undecaprenyl diphosphate + H(+). It carries out the reaction Preferential cleavage: (Ac)2-L-Lys-D-Ala-|-D-Ala. Also transpeptidation of peptidyl-alanyl moieties that are N-acyl substituents of D-alanine.. It functions in the pathway cell wall biogenesis; peptidoglycan biosynthesis. Functionally, cell wall formation. Synthesis of cross-linked peptidoglycan from the lipid intermediates. The enzyme has a penicillin-insensitive transglycosylase N-terminal domain (formation of linear glycan strands) and a penicillin-sensitive transpeptidase C-terminal domain (cross-linking of the peptide subunits). This chain is Penicillin-binding protein 1A (mrcA), found in Rickettsia prowazekii (strain Madrid E).